Here is a 1277-residue protein sequence, read N- to C-terminus: Protein FAM83H (1277 aa).

Polar residues predominate over residues methionine 1–glutamate 12. Disordered stretches follow at residues methionine 1–leucine 20, serine 67–tyrosine 98, phenylalanine 717–leucine 756, serine 772–threonine 805, glutamate 971–phenylalanine 1018, lysine 1070–serine 1130, glutamine 1158–leucine 1225, and lysine 1247–isoleucine 1266. A compositionally biased stretch (basic and acidic residues) spans serine 724–arginine 750. 4 stretches are compositionally biased toward polar residues: residues histidine 777–threonine 805, glutamate 971–asparagine 982, serine 993–asparagine 1015, and lysine 1112–serine 1130. A compositionally biased stretch (low complexity) spans serine 1204–serine 1215. Over residues lysine 1247–alanine 1263 the composition is skewed to basic and acidic residues.

It belongs to the FAM83 family.

The protein localises to the cytoplasm. It is found in the cytoskeleton. Its function is as follows. May play a role in keratin cytoskeleton disassembly. The protein is Protein FAM83H of Xenopus tropicalis (Western clawed frog).